Here is a 1331-residue protein sequence, read N- to C-terminus: ABC multidrug transporter MDR2 (1331 aa).

2 stretches are compositionally biased toward basic and acidic residues: residues 1–20 (MVEVSEKPNTQDDGVSKQEN) and 31–41 (SDKEKVAKKGN). Residues 1–51 (MVEVSEKPNTQDDGVSKQENRNPASSSSSTSDKEKVAKKGNSDATKSSTPE) form a disordered region. 4 helical membrane-spanning segments follow: residues 93-113 (MIFLAIVSLASIAAGAALPLF), 147-167 (YFVYLGIAQFILLYVSTVGFI), 219-239 (KVGLTLTALSTFFSAFIIGYV), and 242-262 (WKLALICSSTIVAMILVMGGI). The ABC transmembrane type-1 1 domain occupies 97-387 (AIVSLASIAA…VAPNTQAFAS (291 aa)). Asparagine 293 carries an N-linked (GlcNAc...) asparagine glycan. Transmembrane regions (helical) follow at residues 325–345 (LGIMFGSMMAIMYSNYGLGFW) and 358–378 (LSAIVNILLAIVIGSFSIGNV). The region spanning 422–667 (IEFRGIKHIY…KGTYLQLVEA (246 aa)) is the ABC transporter 1 domain. Residue 457–464 (GPSGSGKS) coordinates ATP. An N-linked (GlcNAc...) asparagine glycan is attached at asparagine 529. Transmembrane regions (helical) follow at residues 762 to 782 (LCGFFFAVLSGAGQPVQSVFF) and 810 to 830 (FLMLGLVQLVTQSAQGVIFAI). In terms of domain architecture, ABC transmembrane type-1 2 spans 764-1051 (GFFFAVLSGA…VFSFSPDMGK (288 aa)). Asparagine 860 is a glycosylation site (N-linked (GlcNAc...) asparagine). The next 4 helical transmembrane spans lie at 884–904 (LGTILMVSTTLIVALTVALAF), 910–930 (LVCISTVPVLLLCGFYRFWIL), 995–1015 (ASQSFSFFCLALGFWYGGGLL), and 1025–1045 (FFLCISCVIFGSQSAGIVFSF). The ABC transporter 2 domain occupies 1086 to 1324 (IEFRDVHFRY…KGRYYELVHM (239 aa)). Asparagine 1108 is a glycosylation site (N-linked (GlcNAc...) asparagine). An ATP-binding site is contributed by 1121-1128 (GPSGCGKS).

This sequence belongs to the ABC transporter superfamily. ABCB family. Multidrug resistance exporter (TC 3.A.1.201) subfamily.

The protein localises to the cell membrane. The catalysed reaction is itraconazole(in) + ATP + H2O = itraconazole(out) + ADP + phosphate + H(+). In terms of biological role, pleiotropic ABC efflux transporter that may be involved in the modulation susceptibility to a wide range of unrelated cytotoxic compounds, including terbinafine, 4-nitroquinoline N-oxide, and ethidium bromide. May play a role in pathogenicity. In Trichophyton interdigitale (strain MR816), this protein is ABC multidrug transporter MDR2.